The sequence spans 150 residues: UPF0735 ACT domain-containing protein Csac_0995 (150 aa).

Residues 72-147 (TLALVLQDVP…GVKKIEILGR (76 aa)) form the ACT domain.

Belongs to the UPF0735 family.

The polypeptide is UPF0735 ACT domain-containing protein Csac_0995 (Caldicellulosiruptor saccharolyticus (strain ATCC 43494 / DSM 8903 / Tp8T 6331)).